The primary structure comprises 448 residues: Asparagine--tRNA ligase (448 aa).

This sequence belongs to the class-II aminoacyl-tRNA synthetase family. In terms of assembly, homodimer.

The protein localises to the cytoplasm. It catalyses the reaction tRNA(Asn) + L-asparagine + ATP = L-asparaginyl-tRNA(Asn) + AMP + diphosphate + H(+). The chain is Asparagine--tRNA ligase from Streptococcus mutans serotype c (strain ATCC 700610 / UA159).